The following is a 458-amino-acid chain: Glutamyl-tRNA reductase (458 aa).

Residues 49 to 52, Ser109, 114 to 116, and Gln120 each bind substrate; these read TCNR and EQQ. Cys50 serves as the catalytic Nucleophile. 191–196 provides a ligand contact to NADP(+); the sequence is GAGAMA.

Belongs to the glutamyl-tRNA reductase family. As to quaternary structure, homodimer.

It catalyses the reaction (S)-4-amino-5-oxopentanoate + tRNA(Glu) + NADP(+) = L-glutamyl-tRNA(Glu) + NADPH + H(+). The protein operates within porphyrin-containing compound metabolism; protoporphyrin-IX biosynthesis; 5-aminolevulinate from L-glutamyl-tRNA(Glu): step 1/2. In terms of biological role, catalyzes the NADPH-dependent reduction of glutamyl-tRNA(Glu) to glutamate 1-semialdehyde (GSA). The protein is Glutamyl-tRNA reductase of Corynebacterium aurimucosum (strain ATCC 700975 / DSM 44827 / CIP 107346 / CN-1) (Corynebacterium nigricans).